Consider the following 227-residue polypeptide: Cytochrome c oxidase subunit 2 (227 aa).

Topologically, residues 1 to 14 (MAHAVQYGFQDAAA) are mitochondrial intermembrane. Residues 15–45 (PIMEELLYFHDHTLMIVFMISSLVLYIISLM) traverse the membrane as a helical segment. Residues 46–59 (LSTELTHTSTMDAQ) are Mitochondrial matrix-facing. Residues 60 to 87 (EVETVWTILPAVILILIALPSLRILYMM) traverse the membrane as a helical segment. The Mitochondrial intermembrane portion of the chain corresponds to 88-227 (DEIETPSLTL…YFEEWLLKTL (140 aa)). Positions 161, 196, 198, 200, 204, and 207 each coordinate Cu cation. Mg(2+) is bound at residue Glu-198. Phosphotyrosine is present on Tyr-218.

Belongs to the cytochrome c oxidase subunit 2 family. As to quaternary structure, component of the cytochrome c oxidase (complex IV, CIV), a multisubunit enzyme composed of 14 subunits. The complex is composed of a catalytic core of 3 subunits MT-CO1, MT-CO2 and MT-CO3, encoded in the mitochondrial DNA, and 11 supernumerary subunits COX4I, COX5A, COX5B, COX6A, COX6B, COX6C, COX7A, COX7B, COX7C, COX8 and NDUFA4, which are encoded in the nuclear genome. The complex exists as a monomer or a dimer and forms supercomplexes (SCs) in the inner mitochondrial membrane with NADH-ubiquinone oxidoreductase (complex I, CI) and ubiquinol-cytochrome c oxidoreductase (cytochrome b-c1 complex, complex III, CIII), resulting in different assemblies (supercomplex SCI(1)III(2)IV(1) and megacomplex MCI(2)III(2)IV(2)). Found in a complex with TMEM177, COA6, COX18, COX20, SCO1 and SCO2. Interacts with TMEM177 in a COX20-dependent manner. Interacts with COX20. Interacts with COX16. The cofactor is Cu cation.

Its subcellular location is the mitochondrion inner membrane. It carries out the reaction 4 Fe(II)-[cytochrome c] + O2 + 8 H(+)(in) = 4 Fe(III)-[cytochrome c] + 2 H2O + 4 H(+)(out). Functionally, component of the cytochrome c oxidase, the last enzyme in the mitochondrial electron transport chain which drives oxidative phosphorylation. The respiratory chain contains 3 multisubunit complexes succinate dehydrogenase (complex II, CII), ubiquinol-cytochrome c oxidoreductase (cytochrome b-c1 complex, complex III, CIII) and cytochrome c oxidase (complex IV, CIV), that cooperate to transfer electrons derived from NADH and succinate to molecular oxygen, creating an electrochemical gradient over the inner membrane that drives transmembrane transport and the ATP synthase. Cytochrome c oxidase is the component of the respiratory chain that catalyzes the reduction of oxygen to water. Electrons originating from reduced cytochrome c in the intermembrane space (IMS) are transferred via the dinuclear copper A center (CU(A)) of subunit 2 and heme A of subunit 1 to the active site in subunit 1, a binuclear center (BNC) formed by heme A3 and copper B (CU(B)). The BNC reduces molecular oxygen to 2 water molecules using 4 electrons from cytochrome c in the IMS and 4 protons from the mitochondrial matrix. The sequence is that of Cytochrome c oxidase subunit 2 (MT-CO2) from Galago senegalensis (Northern lesser bushbaby).